The primary structure comprises 333 residues: tRNA-modifying protein YgfZ (333 aa).

Trp33 and Trp195 together coordinate folate.

The protein belongs to the tRNA-modifying YgfZ family.

Its subcellular location is the cytoplasm. Functionally, folate-binding protein involved in regulating the level of ATP-DnaA and in the modification of some tRNAs. It is probably a key factor in regulatory networks that act via tRNA modification, such as initiation of chromosomal replication. This chain is tRNA-modifying protein YgfZ, found in Pectobacterium carotovorum subsp. carotovorum (strain PC1).